Consider the following 579-residue polypeptide: Fatty-acid amide hydrolase 1 (579 aa).

A helical membrane pass occupies residues 9–29; that stretch reads TLSGVSGVCLACSLLSAAVVL. The Cytoplasmic portion of the chain corresponds to 30–403; the sequence is RWTGRQKARG…GDFVDPCLGD (374 aa). Lysine 142 (charge relay system) is an active-site residue. Residues methionine 191, serine 217, and 238-241 each bind substrate; that span reads IGGS. Serine 217 (charge relay system) is an active-site residue. Serine 241 functions as the Acyl-ester intermediate in the catalytic mechanism. Serine 241 is subject to Phosphoserine. An intramembrane segment occupies 404–433; the sequence is LILILRLPSWFKRLLSLLLKPLFPRLAAFL. The Cytoplasmic segment spans residues 434 to 579; the sequence is NSMRPRSAEK…QLMTPQKQPS (146 aa).

The protein belongs to the amidase family. In terms of assembly, homodimer. In terms of tissue distribution, found in neuronal cells throughout the CNS. Expressed in liver and brain, and to a lesser extent in spleen, lung, kidney and testes.

It localises to the endoplasmic reticulum membrane. Its subcellular location is the golgi apparatus membrane. It catalyses the reaction N-(5Z,8Z,11Z,14Z-eicosatetraenoyl)-ethanolamine + H2O = ethanolamine + (5Z,8Z,11Z,14Z)-eicosatetraenoate. The enzyme catalyses (9Z)-octadecenamide + H2O = (9Z)-octadecenoate + NH4(+). The catalysed reaction is 2-(5Z,8Z,11Z,14Z-eicosatetraenoyl)-glycerol + H2O = glycerol + (5Z,8Z,11Z,14Z)-eicosatetraenoate + H(+). It carries out the reaction (9Z,12Z,15Z)-octadecatrienamide + H2O = (9Z,12Z,15Z)-octadecatrienoate + NH4(+). It catalyses the reaction (5Z,8Z,11Z,14Z)-eicosatetraenamide + H2O = (5Z,8Z,11Z,14Z)-eicosatetraenoate + NH4(+). The enzyme catalyses (6Z)-octadecenamide + H2O = (6Z)-octadecenoate + NH4(+). The catalysed reaction is (15Z)-tetracosenamide + H2O = (15Z)-tetracosenoate + NH4(+). It carries out the reaction (8Z,11Z,14Z)-eicosatrienamide + H2O = (8Z,11Z,14Z)-eicosatrienoate + NH4(+). It catalyses the reaction (11Z,14Z,17Z)-eicosatrienamide + H2O = (11Z,14Z,17Z)-eicosatrienoate + NH4(+). The enzyme catalyses (11Z,14Z)-eicosadienamide + H2O = (11Z,14Z)-eicosadienoate + NH4(+). The catalysed reaction is (9Z,12Z)-octadecadienamide + H2O = (9Z,12Z)-octadecadienoate + NH4(+). It carries out the reaction tetradecamide + H2O = tetradecanoate + NH4(+). It catalyses the reaction N-(9Z-octadecenoyl) ethanolamine + H2O = ethanolamine + (9Z)-octadecenoate. The enzyme catalyses N-(9Z-octadecenoyl)-taurine + H2O = taurine + (9Z)-octadecenoate. The catalysed reaction is 1-O-methyl-(5Z,8Z,11Z,14Z)-eicosatetraenoate + H2O = methanol + (5Z,8Z,11Z,14Z)-eicosatetraenoate + H(+). It carries out the reaction (11Z)-eicosenamide + H2O = (11Z)-eicosenoate + NH4(+). It catalyses the reaction N-(9Z-hexadecenoyl) ethanolamine + H2O = (9Z)-hexadecenoate + ethanolamine. The enzyme catalyses N-octadecanoyl ethanolamine + H2O = octadecanoate + ethanolamine. The catalysed reaction is N-docosanoyl-ethanolamine + H2O = docosanoate + ethanolamine. It carries out the reaction N-tetracosanoyl-taurine + H2O = tetracosanoate + taurine. It catalyses the reaction N-(15Z-tetracosenoyl)-ethanolamine + H2O = (15Z)-tetracosenoate + ethanolamine. The enzyme catalyses N-docosanoyl-taurine + H2O = docosanoate + taurine. The catalysed reaction is N-(15Z-tetracosenoyl)-taurine + H2O = (15Z)-tetracosenoate + taurine. It carries out the reaction N-tricosanoyl-taurine + H2O = tricosanoate + taurine. It catalyses the reaction (9Z)-octadecenoate + glycine = N-(9Z-octadecenoyl)glycine + H2O. The enzyme catalyses N-(5Z,8Z,11Z,14Z)-eicosatetraenoyl-glycine + H2O = (5Z,8Z,11Z,14Z)-eicosatetraenoate + glycine. The catalysed reaction is N-(5Z,8Z,11Z,14Z-eicosatetraenoyl)-L-serine + H2O = (5Z,8Z,11Z,14Z)-eicosatetraenoate + L-serine. Its activity is regulated as follows. inhibited by trifluoromethyl ketone. Catalyzes the hydrolysis of endogenous amidated lipids like the sleep-inducing lipid oleamide ((9Z)-octadecenamide), the endocannabinoid anandamide (N-(5Z,8Z,11Z,14Z-eicosatetraenoyl)-ethanolamine), as well as other fatty amides, to their corresponding fatty acids, thereby regulating the signaling functions of these molecules. Hydrolyzes polyunsaturated substrate anandamide preferentially as compared to monounsaturated substrates. It can also catalyze the hydrolysis of the endocannabinoid 2-arachidonoylglycerol (2-(5Z,8Z,11Z,14Z-eicosatetraenoyl)-glycerol). FAAH cooperates with PM20D1 in the hydrolysis of amino acid-conjugated fatty acids such as N-fatty acyl glycine and N-fatty acyl-L-serine, thereby acting as a physiological regulator of specific subsets of intracellular, but not of extracellular, N-fatty acyl amino acids. The polypeptide is Fatty-acid amide hydrolase 1 (Faah) (Rattus norvegicus (Rat)).